The primary structure comprises 302 residues: Probable proteasome inhibitor (302 aa).

A2 carries the N-acetylalanine modification. 2 disordered regions span residues 151-188 (LDGK…QIHP) and 259-302 (ARFD…SDFI). Residues 259 to 269 (ARFDPYGPPGV) are compositionally biased toward pro residues.

The protein belongs to the proteasome inhibitor PI31 family.

Its function is as follows. Could play an important role in control of proteasome function. Inhibits the hydrolysis of protein and peptide substrates by the 20S proteasome. The protein is Probable proteasome inhibitor of Arabidopsis thaliana (Mouse-ear cress).